The primary structure comprises 93 residues: Chromosomal protein MC1 (93 aa).

The segment at 1 to 43 (SNTRNFVLRDEEGNEHGVFTGKQPRQAALKAANRGDGTKSNPD) is disordered.

Functionally, protects DNA against thermal denaturation and modulates transcription. This is Chromosomal protein MC1 from Methanosarcina barkeri.